A 364-amino-acid chain; its full sequence is DNA polymerase IV (364 aa).

Residues 14 to 198 enclose the UmuC domain; sequence IIHIDMDAFF…LPVEKFHGVG (185 aa). Mg(2+) is bound by residues aspartate 18 and aspartate 116. Glutamate 117 is an active-site residue.

It belongs to the DNA polymerase type-Y family. In terms of assembly, monomer. Requires Mg(2+) as cofactor.

The protein localises to the cytoplasm. It catalyses the reaction DNA(n) + a 2'-deoxyribonucleoside 5'-triphosphate = DNA(n+1) + diphosphate. Poorly processive, error-prone DNA polymerase involved in untargeted mutagenesis. Copies undamaged DNA at stalled replication forks, which arise in vivo from mismatched or misaligned primer ends. These misaligned primers can be extended by PolIV. Exhibits no 3'-5' exonuclease (proofreading) activity. May be involved in translesional synthesis, in conjunction with the beta clamp from PolIII. The protein is DNA polymerase IV of Lactococcus lactis subsp. cremoris (strain SK11).